Here is a 320-residue protein sequence, read N- to C-terminus: Ferrochelatase (320 aa).

Positions 194 and 275 each coordinate Fe cation.

It belongs to the ferrochelatase family. As to quaternary structure, monomer.

It is found in the cytoplasm. The catalysed reaction is heme b + 2 H(+) = protoporphyrin IX + Fe(2+). It participates in porphyrin-containing compound metabolism; protoheme biosynthesis; protoheme from protoporphyrin-IX: step 1/1. Its function is as follows. Catalyzes the ferrous insertion into protoporphyrin IX. This chain is Ferrochelatase, found in Shigella sonnei (strain Ss046).